The chain runs to 359 residues: UDP-3-O-acylglucosamine N-acyltransferase (359 aa).

Histidine 248 functions as the Proton acceptor in the catalytic mechanism.

Belongs to the transferase hexapeptide repeat family. LpxD subfamily. As to quaternary structure, homotrimer.

It catalyses the reaction a UDP-3-O-[(3R)-3-hydroxyacyl]-alpha-D-glucosamine + a (3R)-hydroxyacyl-[ACP] = a UDP-2-N,3-O-bis[(3R)-3-hydroxyacyl]-alpha-D-glucosamine + holo-[ACP] + H(+). It participates in bacterial outer membrane biogenesis; LPS lipid A biosynthesis. Catalyzes the N-acylation of UDP-3-O-acylglucosamine using 3-hydroxyacyl-ACP as the acyl donor. Is involved in the biosynthesis of lipid A, a phosphorylated glycolipid that anchors the lipopolysaccharide to the outer membrane of the cell. In Chlamydia abortus (strain DSM 27085 / S26/3) (Chlamydophila abortus), this protein is UDP-3-O-acylglucosamine N-acyltransferase.